Here is a 229-residue protein sequence, read N- to C-terminus: MKLSKEISAFCDRIGHRFDRPELLVRALTHASRSTAGRSDNQRLEFLGDRVLGLVMAEALLEADPQAREGQLAPRYNALVRKETCAEVAREIGLGDVLRLGRSEMLTGGRRKDALLGDGMEAVIAAVYRDAGFEAAKALILRLWGKRIGAVEADARDPKTALQEWAQARGLPPPAYIESARSGPDHAPVFTISARLETGACAEAQAGSKRQAEQAAAKALLAQVESNHD.

Positions 7 to 132 (ISAFCDRIGH…VIAAVYRDAG (126 aa)) constitute an RNase III domain. Glu-45 is a Mg(2+) binding site. Residue Asp-49 is part of the active site. 2 residues coordinate Mg(2+): Asp-118 and Glu-121. Residue Glu-121 is part of the active site. One can recognise a DRBM domain in the interval 157-226 (DPKTALQEWA…AKALLAQVES (70 aa)).

The protein belongs to the ribonuclease III family. As to quaternary structure, homodimer. Requires Mg(2+) as cofactor.

The protein localises to the cytoplasm. It carries out the reaction Endonucleolytic cleavage to 5'-phosphomonoester.. Digests double-stranded RNA. Involved in the processing of primary rRNA transcript to yield the immediate precursors to the large and small rRNAs (23S and 16S). Processes some mRNAs, and tRNAs when they are encoded in the rRNA operon. Processes pre-crRNA and tracrRNA of type II CRISPR loci if present in the organism. This Dinoroseobacter shibae (strain DSM 16493 / NCIMB 14021 / DFL 12) protein is Ribonuclease 3.